The chain runs to 1273 residues: Lysine-specific histone demethylase 2 (1273 aa).

Residues 199 to 230 show a composition bias toward polar residues; sequence ENFFDANSPSSQQFPSTYPSRSQNPLSSSGDG. The interval 199-237 is disordered; sequence ENFFDANSPSSQQFPSTYPSRSQNPLSSSGDGSTAIHAG. Positions 247–307 form a coiled coil; that stretch reads FSNYPYPLDA…LSKSVDNAVL (61 aa). The 97-residue stretch at 394-490 folds into the SWIRM domain; sequence AAEAARKCNL…YGCLSFDSSF (97 aa). FAD is bound by residues 509-551, threonine 517, glutamate 550, arginine 558, and 572-573; these read IAVV…ILEA and TQ. The tract at residues 542–1198 is demethylase activity; the sequence is LPPKVIILEA…GKILRYQRLT (657 aa). The interval 571-596 is disordered; the sequence is ATQINHHTSNSNSISSNSTSLNPKDV. The segment covering 574–590 has biased composition (low complexity); it reads INHHTSNSNSISSNSTS. The stretch at 681–767 forms a coiled coil; it reads SVRISWISQF…NTVDTDFSKD (87 aa). The segment at residues 1115–1195 is a DNA-binding region (HMG box); it reads SKPNANPFLL…AYAGKILRYQ (81 aa). FAD contacts are provided by residues aspartate 1147 and 1156-1157; that span reads ET. The segment at 1215-1273 is disordered; that stretch reads KCQDEPIPDDEARLFMQAQREEEQRKQTQDDNISKSREASDEEYHDDGSSDSGYNGTRY. A compositionally biased stretch (basic and acidic residues) spans 1233 to 1253; sequence QREEEQRKQTQDDNISKSREA. Residues 1264-1273 are compositionally biased toward polar residues; sequence SDSGYNGTRY.

It belongs to the flavin monoamine oxidase family. As to quaternary structure, component of the SWM histone demethylase complex composed of at least lsd1, lsd2, phf1 and phf2. Interacts directly with lsd1. FAD serves as cofactor.

It is found in the nucleus. Its function is as follows. Catalytic component of the SWM histone demethylase complex that specifically demethylates H3K9me2, a specific tag for epigenetic transcriptional activation, thereby acting as a corepressor. Acts by oxidizing the substrate by FAD to generate the corresponding imine that is subsequently hydrolyzed. Has a role in regulating heterochromatin propagation and euchromatic transcription. Also has a gene activating role. The sequence is that of Lysine-specific histone demethylase 2 (lsd2) from Schizosaccharomyces pombe (strain 972 / ATCC 24843) (Fission yeast).